We begin with the raw amino-acid sequence, 487 residues long: N-succinylglutamate 5-semialdehyde dehydrogenase (487 aa).

NAD(+) is bound at residue 221–226 (GSSRTG). Active-site residues include E244 and C278.

The protein belongs to the aldehyde dehydrogenase family. AstD subfamily.

The catalysed reaction is N-succinyl-L-glutamate 5-semialdehyde + NAD(+) + H2O = N-succinyl-L-glutamate + NADH + 2 H(+). It functions in the pathway amino-acid degradation; L-arginine degradation via AST pathway; L-glutamate and succinate from L-arginine: step 4/5. In terms of biological role, catalyzes the NAD-dependent reduction of succinylglutamate semialdehyde into succinylglutamate. This Pseudomonas entomophila (strain L48) protein is N-succinylglutamate 5-semialdehyde dehydrogenase.